An 867-amino-acid polypeptide reads, in one-letter code: Valine--tRNA ligase (867 aa).

A 'HIGH' region motif is present at residues 42 to 52 (PNITGKIHMGH). Residues 521-525 (KMSKS) carry the 'KMSKS' region motif. Lysine 524 serves as a coordination point for ATP. The stretch at 794 to 867 (LGTLIDVKSE…QIISDLEAKA (74 aa)) forms a coiled coil.

This sequence belongs to the class-I aminoacyl-tRNA synthetase family. ValS type 1 subfamily. Monomer.

The protein localises to the cytoplasm. The catalysed reaction is tRNA(Val) + L-valine + ATP = L-valyl-tRNA(Val) + AMP + diphosphate. In terms of biological role, catalyzes the attachment of valine to tRNA(Val). As ValRS can inadvertently accommodate and process structurally similar amino acids such as threonine, to avoid such errors, it has a 'posttransfer' editing activity that hydrolyzes mischarged Thr-tRNA(Val) in a tRNA-dependent manner. In Fervidobacterium nodosum (strain ATCC 35602 / DSM 5306 / Rt17-B1), this protein is Valine--tRNA ligase.